The chain runs to 173 residues: NADH-ubiquinone oxidoreductase chain 6 (173 aa).

5 helical membrane passes run 1–21 (MTYFVLFLGLCFVLGGLAVAS), 27–47 (YGVVGLVLASVAGCGWLLSLG), 48–68 (VSFVSLVLFMVYLGGMLVVFV), 87–107 (VVGYGVGFVMVLMVGMVVGGF), and 139–159 (CGVGMFLVAGWGLLLTLFVVL).

It belongs to the complex I subunit 6 family.

It is found in the mitochondrion membrane. It carries out the reaction a ubiquinone + NADH + 5 H(+)(in) = a ubiquinol + NAD(+) + 4 H(+)(out). Its function is as follows. Core subunit of the mitochondrial membrane respiratory chain NADH dehydrogenase (Complex I) that is believed to belong to the minimal assembly required for catalysis. Complex I functions in the transfer of electrons from NADH to the respiratory chain. The immediate electron acceptor for the enzyme is believed to be ubiquinone. The polypeptide is NADH-ubiquinone oxidoreductase chain 6 (MT-ND6) (Aethia pusilla (Least auklet)).